Consider the following 165-residue polypeptide: Xanthine-guanine phosphoribosyltransferase (165 aa).

Residues 41 to 42 and 98 to 106 each bind 5-phospho-alpha-D-ribose 1-diphosphate; these read RG and DDLTDTGKT. Residue D99 coordinates Mg(2+). D102 and I145 together coordinate guanine. The xanthine site is built by D102 and I145. GMP-binding positions include 102-106 and 144-145; these read DTGKT and WI.

This sequence belongs to the purine/pyrimidine phosphoribosyltransferase family. XGPT subfamily. Homotetramer. Requires Mg(2+) as cofactor.

It is found in the cell inner membrane. The enzyme catalyses GMP + diphosphate = guanine + 5-phospho-alpha-D-ribose 1-diphosphate. It carries out the reaction XMP + diphosphate = xanthine + 5-phospho-alpha-D-ribose 1-diphosphate. It catalyses the reaction IMP + diphosphate = hypoxanthine + 5-phospho-alpha-D-ribose 1-diphosphate. It participates in purine metabolism; GMP biosynthesis via salvage pathway; GMP from guanine: step 1/1. The protein operates within purine metabolism; XMP biosynthesis via salvage pathway; XMP from xanthine: step 1/1. Functionally, purine salvage pathway enzyme that catalyzes the transfer of the ribosyl-5-phosphate group from 5-phospho-alpha-D-ribose 1-diphosphate (PRPP) to the N9 position of the 6-oxopurines guanine and xanthine to form the corresponding ribonucleotides GMP (guanosine 5'-monophosphate) and XMP (xanthosine 5'-monophosphate), with the release of PPi. To a lesser extent, also acts on hypoxanthine. The polypeptide is Xanthine-guanine phosphoribosyltransferase (Chelativorans sp. (strain BNC1)).